A 117-amino-acid chain; its full sequence is Ribosome-binding factor A (117 aa).

Belongs to the RbfA family. In terms of assembly, monomer. Binds 30S ribosomal subunits, but not 50S ribosomal subunits or 70S ribosomes.

The protein resides in the cytoplasm. Its function is as follows. One of several proteins that assist in the late maturation steps of the functional core of the 30S ribosomal subunit. Associates with free 30S ribosomal subunits (but not with 30S subunits that are part of 70S ribosomes or polysomes). Required for efficient processing of 16S rRNA. May interact with the 5'-terminal helix region of 16S rRNA. This chain is Ribosome-binding factor A, found in Leptospira borgpetersenii serovar Hardjo-bovis (strain JB197).